A 156-amino-acid chain; its full sequence is Protein Smg homolog (156 aa).

The protein belongs to the Smg family.

The chain is Protein Smg homolog from Halorhodospira halophila (strain DSM 244 / SL1) (Ectothiorhodospira halophila (strain DSM 244 / SL1)).